The primary structure comprises 273 residues: WIMGHMVNAIAQIDEFVNLGANSIETDVSFDSSANPEYTYHGIPCDCGRTCTKWEHFNEFLKGLRKATTPGDSKYHEKLVLVVFDLKTGSLYDNQASDAGKKLAKSLLQNYWNNGNNGGGAYIVLSIPNLAHYKLITGFKEALTSEGHPELMDKVGYDFSGNDDIGDVANAYKKAGVTGHVWQSDGITNCLLRGLDRVRKAVANRDSSNGYINKVYYWTVDKRQSTRDALDAGVDGIMTNYPDVIADVLNESAYKAKFRIASYDDNPWETFKN.

His-5 is a catalytic residue. Mg(2+)-binding residues include Glu-25 and Asp-27. His-41 functions as the Nucleophile in the catalytic mechanism. Cystine bridges form between Cys-45/Cys-51 and Cys-47/Cys-190. Asp-85 is a Mg(2+) binding site. Residue Asn-250 is glycosylated (N-linked (GlcNAc...) asparagine).

Belongs to the arthropod phospholipase D family. Class II subfamily. The cofactor is Mg(2+). As to expression, expressed by the venom gland.

The protein resides in the secreted. It carries out the reaction an N-(acyl)-sphingosylphosphocholine = an N-(acyl)-sphingosyl-1,3-cyclic phosphate + choline. The enzyme catalyses an N-(acyl)-sphingosylphosphoethanolamine = an N-(acyl)-sphingosyl-1,3-cyclic phosphate + ethanolamine. The catalysed reaction is a 1-acyl-sn-glycero-3-phosphocholine = a 1-acyl-sn-glycero-2,3-cyclic phosphate + choline. It catalyses the reaction a 1-acyl-sn-glycero-3-phosphoethanolamine = a 1-acyl-sn-glycero-2,3-cyclic phosphate + ethanolamine. Functionally, dermonecrotic toxins cleave the phosphodiester linkage between the phosphate and headgroup of certain phospholipids (sphingolipid and lysolipid substrates), forming an alcohol (often choline) and a cyclic phosphate. This toxin acts on sphingomyelin (SM). It may also act on ceramide phosphoethanolamine (CPE), lysophosphatidylcholine (LPC) and lysophosphatidylethanolamine (LPE), but not on lysophosphatidylserine (LPS), and lysophosphatidylglycerol (LPG). It acts by transphosphatidylation, releasing exclusively cyclic phosphate products as second products. Induces dermonecrosis, hemolysis, increased vascular permeability, edema, inflammatory response, and platelet aggregation. The protein is Dermonecrotic toxin LapSicTox-alphaIB1b3 of Loxosceles apachea (Apache recluse spider).